An 877-amino-acid chain; its full sequence is MSTYSRYNDEDEIRNNKISFGDNIKREFLHLKLLLKKNLLVSIRSYFSTGIEILSPIAFIIILFLISHFGSGNENPIVTYNQELPICKSYGENRCFNIMFSPSNSPSAIAIMEMLGEINNNSIYSYPSDTGYLPDLNNTIGLKGGLIMMNSIEDSFEFVLAHPNVTIAAVDFLSIPLGFQINGAPPKNEPLLKMDGNSLEFNVVVNTTCPNILATCPDYSIAITTAIEKAVITYYSQKIRNEKIPPPTISYGSNAFPRYPPEQGAARVWGGLFYYCGSMISFIFLLYKVSFEKENKLKQGMVMMGLSVNQYWISWFITSFTIDILISLITIIVGLACQLPFFLGSNFFVLIITFSLFTISMSSVAFFLLTFIQSTKSAIGIGMGIFIVGSIFQLVFSGMGTMIFELIYQTNSNGALAARIILFFIPMFHFTKVLTDIGNVTTNYPLLTYKFSDLSTDLNIGGTVLKTVIPTTGQSICYLLALIGVYTVLAWYFEHIIPGNDGTSSPPWFFVLPSYWGLSLKKVRHIPTPYFDDEDVRAAITKAHDASNRAPLIICGLSKSYTKLFRPKKTVHAVKYLSLSVEKGTILGFLGSNGCGKSTTIGMLTGLLEPTAGDALVYGHSVISNIAAVRRITSVVPQHDILWAEMTAREHLQLFSELKGIPAQERESQIQKVLDQVRLSKISNNLISTYSGGMKRRLSVAIACIGDPKIIFMDEPTTGVDPSSKRHLIDLVKSIKNDKVIILTSHDMHEVEILADKIVIMNEGVMACNGNSLQLKSKYGEGYSVNIVAKSPESIPAVVEFVTLSIPGCKFMKQSALQLNFGFPVTIDHQIIANFFKQLEEITNDPNNQLMRDWSVSHSTLDDVFLKVSHLAKLKTQ.

The next 7 helical transmembrane spans lie at 46 to 66 (YFST…LFLI), 268 to 288 (VWGG…LLYK), 324 to 344 (ILIS…FFLG), 347 to 367 (FFVL…VAFF), 379 to 399 (IGIG…FSGM), 420 to 440 (IILF…IGNV), and 479 to 499 (LLAL…IIPG). Positions 552–788 (LIICGLSKSY…YGEGYSVNIV (237 aa)) constitute an ABC transporter domain. 591 to 598 (GSNGCGKS) lines the ATP pocket.

This sequence belongs to the ABC transporter superfamily. ABCA family.

Its subcellular location is the membrane. The protein is ABC transporter A family member 1 (abcA1) of Dictyostelium discoideum (Social amoeba).